The chain runs to 250 residues: LOB domain-containing protein 37 (250 aa).

The region spanning 1–107 is the LOB domain; that stretch reads MSCNGCRVLR…VETVLRGGSL (107 aa). Positions 145-227 are disordered; that stretch reads DSTDRNIYHH…DSGTTTTTTA (83 aa). A compositionally biased stretch (low complexity) spans 157-170; sequence FSSSRSRSTMDSSS.

It belongs to the LOB domain-containing protein family. As to expression, expressed in young shoots, roots, stems, leaves and flowers.

The polypeptide is LOB domain-containing protein 37 (LBD37) (Arabidopsis thaliana (Mouse-ear cress)).